The chain runs to 34 residues: IICAPEGGPCVAGIGCCAGLRCSGAKLGLAGSCQ.

3 cysteine pairs are disulfide-bonded: Cys3–Cys17, Cys10–Cys22, and Cys16–Cys33.

This sequence belongs to the neurotoxin 14 (magi-1) family. 05 (ICK-7) subfamily. As to expression, expressed by the venom gland.

The protein localises to the secreted. In terms of biological role, intracisternal injection paralyzes mice. This chain is U4-theraphotoxin-Hs1a, found in Cyriopagopus schmidti (Chinese bird spider).